We begin with the raw amino-acid sequence, 256 residues long: Protein FixA (256 aa).

This sequence belongs to the ETF beta-subunit/FixA family. As to quaternary structure, heterodimer of FixA and FixB.

It participates in amine and polyamine metabolism; carnitine metabolism. In terms of biological role, required for anaerobic carnitine reduction. May bring reductant to CaiA. The polypeptide is Protein FixA (Escherichia coli O139:H28 (strain E24377A / ETEC)).